The following is a 235-amino-acid chain: tRNA (guanine-N(1)-)-methyltransferase (235 aa).

S-adenosyl-L-methionine is bound by residues G112 and 132 to 137; that span reads LGDFVL.

This sequence belongs to the RNA methyltransferase TrmD family. Homodimer.

The protein localises to the cytoplasm. It catalyses the reaction guanosine(37) in tRNA + S-adenosyl-L-methionine = N(1)-methylguanosine(37) in tRNA + S-adenosyl-L-homocysteine + H(+). Its function is as follows. Specifically methylates guanosine-37 in various tRNAs. The sequence is that of tRNA (guanine-N(1)-)-methyltransferase from Acaryochloris marina (strain MBIC 11017).